A 493-amino-acid chain; its full sequence is Betaine aldehyde dehydrogenase (493 aa).

Residues Ser-32, Ile-33, and Asp-99 each contribute to the K(+) site. 156–158 (GAW) is an NAD(+) binding site. Lys-168 serves as the catalytic Charge relay system. NAD(+) is bound by residues 182-185 (KPSE) and 235-238 (SVPT). Residue Leu-250 participates in K(+) binding. The active-site Proton acceptor is the Glu-256. The NAD(+) site is built by Gly-258, Cys-290, and Glu-390. Cys-290 (nucleophile) is an active-site residue. Cys-290 is modified (cysteine sulfenic acid (-SOH)). K(+)-binding residues include Lys-460 and Gly-463. Glu-467 (charge relay system) is an active-site residue.

It belongs to the aldehyde dehydrogenase family. Dimer of dimers. K(+) is required as a cofactor.

The catalysed reaction is betaine aldehyde + NAD(+) + H2O = glycine betaine + NADH + 2 H(+). The protein operates within amine and polyamine biosynthesis; betaine biosynthesis via choline pathway; betaine from betaine aldehyde: step 1/1. Its function is as follows. Involved in the biosynthesis of the osmoprotectant glycine betaine. Catalyzes the irreversible oxidation of betaine aldehyde to the corresponding acid. The polypeptide is Betaine aldehyde dehydrogenase (Agrobacterium fabrum (strain C58 / ATCC 33970) (Agrobacterium tumefaciens (strain C58))).